The following is a 506-amino-acid chain: Glutamyl-tRNA(Gln) amidotransferase subunit A, mitochondrial (506 aa).

Residues lysine 62 and serine 141 each act as charge relay system in the active site. Serine 165 (acyl-ester intermediate) is an active-site residue.

This sequence belongs to the amidase family. GatA subfamily. In terms of assembly, subunit of the heterotrimeric GatCAB amidotransferase (AdT) complex, composed of A, B and C subunits.

The protein localises to the mitochondrion. It carries out the reaction L-glutamyl-tRNA(Gln) + L-glutamine + ATP + H2O = L-glutaminyl-tRNA(Gln) + L-glutamate + ADP + phosphate + H(+). Allows the formation of correctly charged Gln-tRNA(Gln) through the transamidation of misacylated Glu-tRNA(Gln) in the mitochondria. The reaction takes place in the presence of glutamine and ATP through an activated gamma-phospho-Glu-tRNA(Gln). This Emericella nidulans (strain FGSC A4 / ATCC 38163 / CBS 112.46 / NRRL 194 / M139) (Aspergillus nidulans) protein is Glutamyl-tRNA(Gln) amidotransferase subunit A, mitochondrial.